The primary structure comprises 310 residues: tRNA uridine(34) hydroxylase (310 aa).

A Rhodanese domain is found at 127 to 225 (KDKNTIVVDT…YLEDMSKEES (99 aa)). Cys-185 serves as the catalytic Cysteine persulfide intermediate.

This sequence belongs to the TrhO family.

It catalyses the reaction uridine(34) in tRNA + AH2 + O2 = 5-hydroxyuridine(34) in tRNA + A + H2O. Functionally, catalyzes oxygen-dependent 5-hydroxyuridine (ho5U) modification at position 34 in tRNAs. The sequence is that of tRNA uridine(34) hydroxylase from Prochlorococcus marinus subsp. pastoris (strain CCMP1986 / NIES-2087 / MED4).